A 515-amino-acid chain; its full sequence is Protein pid-4 (515 aa).

The disordered stretch occupies residues 496–515; it reads DRSPQKFKFPASGSYMKPAN.

As to quaternary structure, may interact with pid-2, app-1 and prmt-5.

The protein resides in the cytoplasm. It localises to the perinuclear region. Its subcellular location is the P-body. In terms of biological role, together with pid-5, it is involved in gene silencing mediated by a class of 21 nucleotide PIWI-interacting RNAs (piRNAs) that possess a uracil residue at the 5'-end (also called 21U-RNAs) and guide the Piwi protein prg-1 to its DNA targets for silencing. Together with pid-5, it is required for the biogenesis of secondary and tertiary 22G-siRNAs. Specifically, promotes the production of 22G-siRNAs from the 5' end of target mRNAs. Together with pid-5, plays a role in small RNA-directed transgenerational epigenetic inheritance (also called RNAe) over several generations and germline immortality. Together with pid-5, plays a role in the formation of liquid-like condensates in the cytoplasm called Z granules. The protein is Protein pid-4 of Caenorhabditis elegans.